Consider the following 152-residue polypeptide: Transcriptional regulator MraZ (152 aa).

SpoVT-AbrB domains are found at residues 5–52 (ATMV…PLPE) and 81–124 (ASEC…DEQT).

Belongs to the MraZ family. In terms of assembly, forms oligomers.

The protein localises to the cytoplasm. The protein resides in the nucleoid. Functionally, negatively regulates its own expression and that of the subsequent genes in the proximal part of the division and cell wall (dcw) gene cluster. Acts by binding directly to DNA. May also regulate the expression of genes outside the dcw cluster. The sequence is that of Transcriptional regulator MraZ from Serratia proteamaculans (strain 568).